The chain runs to 75 residues: Peptide Ctri10036 (75 aa).

The N-terminal stretch at 1-22 (MNSKYLFVFLILNVIFIDLCQG) is a signal peptide. Lys-41 is modified (lysine amide). The propeptide occupies 47–75 (ELGSQYDYLQDFRKRELDLDDLLSKFPDY).

The protein belongs to the non-disulfide-bridged peptide (NDBP) superfamily. Short antimicrobial peptide (group 4) family. Expressed by the venom gland.

Its subcellular location is the secreted. This chain is Peptide Ctri10036, found in Chaerilus tricostatus (Scorpion).